A 445-amino-acid chain; its full sequence is Crotonyl-CoA reductase (445 aa).

Zn(2+) is bound at residue E149.

Belongs to the zinc-containing alcohol dehydrogenase family. Crotonyl-CoA carboxylase/reductase subfamily. In terms of assembly, homodimer. It depends on Zn(2+) as a cofactor.

The enzyme catalyses butanoyl-CoA + NADP(+) = (2E)-butenoyl-CoA + NADPH + H(+). With respect to regulation, inhibited by NADPH at concentrations above 200 uM, by MgCl (30%), by ZnCl(2) (55%), and by CoCl, MnCl and CaCl (100%). Also inhibited by iodoacetamide, N-ethylmaleamide, the thiol group inhibitor beta-chloromercuribenzoate, palmitoyl-CoA and myristoyl-CoA. Its function is as follows. Catalyzes the conversion of crotonyl-CoA to butyryl-CoA. It uses only NADP as electron donor. May have a role in providing butyryl-CoA as a starter unit for straight-chain fatty acid biosynthesis. This Streptomyces avermitilis (strain ATCC 31267 / DSM 46492 / JCM 5070 / NBRC 14893 / NCIMB 12804 / NRRL 8165 / MA-4680) protein is Crotonyl-CoA reductase (ccrA2).